A 172-amino-acid polypeptide reads, in one-letter code: UPF0114 protein PMI3225 (172 aa).

A run of 4 helical transmembrane segments spans residues 15–35 (LFAP…IKFF), 57–77 (LLSL…IFSG), 108–128 (KVAA…FMDL), and 136–156 (LLWY…MGYL).

The protein belongs to the UPF0114 family.

It localises to the cell membrane. In Proteus mirabilis (strain HI4320), this protein is UPF0114 protein PMI3225.